Here is a 976-residue protein sequence, read N- to C-terminus: MEKQKPFALFVPPRSSSSQVSAVKPQTLGGDSTFFKSFNKCTEDDFEFPFAKTNLSKNGENIDSDPALQKVNFLPVLEQVGNSDCHYQEGLKDSDLENSEGLSRVYSKLYKEAEKIKKWKVSTEAELRQKESKLQENRKIIEAQRKAIQELQFGNEKVSLKLEEGIQENKDLIKENNATRHLCNLLKETCARSAEKTKKYEYEREETRQVYMDLNNNIEKMITAFEELRVQAENSRLEMHFKLKEDYEKIQHLEQEYKKEINDKEKQVSLLLIQITEKENKMKDLTFLLEESRDKVNQLEEKTKLQSENLKQSIEKQHHLTKELEDIKVSLQRSVSTQKALEEDLQIATKTICQLTEEKETQMEESNKARAAHSFVVTEFETTVCSLEELLRTEQQRLEKNEDQLKILTMELQKKSSELEEMTKLTNNKEVELEELKKVLGEKETLLYENKQFEKIAEELKGTEQELIGLLQAREKEVHDLEIQLTAITTSEQYYSKEVKDLKTELENEKLKNTELTSHCNKLSLENKELTQETSDMTLELKNQQEDINNNKKQEERMLKQIENLQETETQLRNELEYVREELKQKRDEVKCKLDKSEENCNNLRKQVENKNKYIEELQQENKALKKKGTAESKQLNVYEIKVNKLELELESAKQKFGEITDTYQKEIEDKKISEENLLEEVEKAKVIADEAVKLQKEIDKRCQHKIAEMVALMEKHKHQYDKIIEERDSELGLYKSKEQEQSSLRASLEIELSNLKAELLSVKKQLEIEREEKEKLKREAKENTATLKEKKDKKTQTFLLETPEIYWKLDSKAVPSQTVSRNFTSVDHGISKDKRDYLWTSAKNTLSTPLPKAYTVKTPTKPKLQQRENLNIPIEESKKKRKMAFEFDINSDSSETTDLLSMVSEEETLKTLYRNNNPPASHLCVKTPKKAPSSLTTPGSTLKFGAIRKMREDRWAVIAKMDRKKKLKEAEKLFV.

The Mediates head to head self-assembly of N-terminal ends motif lies at 101 to 111 (GLSRVYSKLYK). Positions 117 to 120 (KKWK) match the Nuclear localization signal motif. Residues 206–362 (ETRQVYMDLN…CQLTEEKETQ (157 aa)) are interaction with SYCE3. Coiled-coil stretches lie at residues 211 to 316 (YMDL…SIEK), 391 to 439 (LRTE…LKKV), 499 to 685 (VKDL…VEKA), and 739 to 798 (EQEQ…KTQT). The interval 676 to 770 (ENLLEEVEKA…LSVKKQLEIE (95 aa)) is required for pH-induced assembly of C-terminal ends into antiparallel tetramers. Positions 679–682 (LEEV) match the Nuclear localization signal motif. The segment at 784 to 976 (NTATLKEKKD…KLKEAEKLFV (193 aa)) is DNA-binding. A Nuclear localization signal motif is present at residues 880 to 883 (KKRK).

As to quaternary structure, structural component of synaptonemal complexes. Homotetramer that consists of an N-terminal four-helical bundle that bifurcates into two elongated C-terminal dimeric coiled coils. This tetrameric building block potentially self-assembles into a supramolecular zipper-like lattice to mediate meiotic chromosome synapsis. Self-assembly is likely initiated by local proton density at chromosome axis, which is predicted to trigger antiparallel back to back assembly of adjacent C-terminal ends into tetrameric structures that anchor to chromosomal DNA. Then the N-terminal ends are predicted to undergo cooperative antiparallel head to head assembly at the midline of synaptonemal complexes central element to form a zipper-like lattice between properly aligned homologous chromosomes. The nascent synapsis generated by SYCP1 is stabilized through interaction with central element proteins SYCE1 and SYCE2. Interacts (via tetrameric core) with SYCE3; the interaction remodels SYCP1 homotetramers to 2:1 heterotrimers with SYCE3. SYCP1/SYCE3 heterotrimers form lattice assemblies as part of the mature synaptonemal complex via both lateral and head-to-head interactions. Forms a complex with EWSR1, PRDM9, SYCP3 and REC8; complex formation is dependent of phosphorylated form of REC8 and requires PRDM9 bound to hotspot DNA; EWSR1 joins PRDM9 with the chromosomal axis through REC8. Interacts with SPO16. In terms of tissue distribution, testis.

It localises to the nucleus. It is found in the chromosome. Its subcellular location is the centromere. Functionally, major component of the transverse filaments of synaptonemal complexes, formed between homologous chromosomes during meiotic prophase. Required for normal assembly of the central element of the synaptonemal complexes. Required for normal centromere pairing during meiosis. Required for normal meiotic chromosome synapsis during oocyte and spermatocyte development and for normal male and female fertility. This is Synaptonemal complex protein 1 from Homo sapiens (Human).